A 92-amino-acid chain; its full sequence is Small ribosomal subunit protein uS19 (92 aa).

The protein belongs to the universal ribosomal protein uS19 family.

Protein S19 forms a complex with S13 that binds strongly to the 16S ribosomal RNA. The polypeptide is Small ribosomal subunit protein uS19 (Aliivibrio salmonicida (strain LFI1238) (Vibrio salmonicida (strain LFI1238))).